Reading from the N-terminus, the 254-residue chain is Thiazole synthase (254 aa).

The Schiff-base intermediate with DXP role is filled by Lys-95. 1-deoxy-D-xylulose 5-phosphate-binding positions include Gly-156, 182–183, and 204–205; these read AG and NT.

It belongs to the ThiG family. Homotetramer. Forms heterodimers with either ThiH or ThiS.

It localises to the cytoplasm. It catalyses the reaction [ThiS sulfur-carrier protein]-C-terminal-Gly-aminoethanethioate + 2-iminoacetate + 1-deoxy-D-xylulose 5-phosphate = [ThiS sulfur-carrier protein]-C-terminal Gly-Gly + 2-[(2R,5Z)-2-carboxy-4-methylthiazol-5(2H)-ylidene]ethyl phosphate + 2 H2O + H(+). The protein operates within cofactor biosynthesis; thiamine diphosphate biosynthesis. In terms of biological role, catalyzes the rearrangement of 1-deoxy-D-xylulose 5-phosphate (DXP) to produce the thiazole phosphate moiety of thiamine. Sulfur is provided by the thiocarboxylate moiety of the carrier protein ThiS. In vitro, sulfur can be provided by H(2)S. This is Thiazole synthase from Shewanella sediminis (strain HAW-EB3).